The following is a 321-amino-acid chain: Solute carrier family 25 member 33 (321 aa).

Solcar repeat units lie at residues 9-118, 126-213, and 231-315; these read ENTL…AKEQ, NSNI…LKKY, and TSFF…IVYL. Transmembrane regions (helical) follow at residues 12–32, 49–65, 121–141, 190–210, 233–253, and 298–318; these read LLHLFAGGCGGTVGAIFTCPL, VYYPQVHLGTISGAGMV, GIFVPNSNIVHIFSAGSAAFI, LTASYAGISETIICFAIYESL, FFGLMAAAALSKGCASCIAYP, and QIPNTAIVLSTYELIVYLLED.

The protein belongs to the mitochondrial carrier (TC 2.A.29) family. As to expression, expressed in the central nervous system. Also expressed in testis and skeletal muscle. Weakly expressed in heart, liver, kidney, prostate, colon and peripheral blood leukocytes.

It is found in the mitochondrion inner membrane. It catalyses the reaction UTP(in) + UDP(out) = UTP(out) + UDP(in). It carries out the reaction dUTP(out) + UTP(in) = dUTP(in) + UTP(out). The catalysed reaction is 5-methyl-UTP(out) + UTP(in) = 5-methyl-UTP(in) + UTP(out). The enzyme catalyses 5-methyl-UDP(out) + UTP(in) = 5-methyl-UDP(in) + UTP(out). It catalyses the reaction UTP(in) + CTP(out) = UTP(out) + CTP(in). It carries out the reaction CDP(out) + UTP(in) = CDP(in) + UTP(out). The catalysed reaction is dCTP(out) + UTP(in) = dCTP(in) + UTP(out). The enzyme catalyses dCDP(out) + UTP(in) = dCDP(in) + UTP(out). It catalyses the reaction UTP(in) + GTP(out) = UTP(out) + GTP(in). It carries out the reaction UTP(in) + GDP(out) = UTP(out) + GDP(in). The catalysed reaction is dGTP(out) + UTP(in) = dGTP(in) + UTP(out). The enzyme catalyses dGDP(out) + UTP(in) = dGDP(in) + UTP(out). It catalyses the reaction ITP(out) + UTP(in) = ITP(in) + UTP(out). Inhibited by pyridoxal 5'-phosphate, 4,7-diphenyl-1,10-phenanthroline, tannic acid, and mercurials (mercury dichloride, mersalyl acid, p-hydroxymercuribenzoate). In terms of biological role, mitochondrial transporter that imports/exports pyrimidine nucleotides into and from mitochondria. Selectively transports uridine, thymidine, guanosine, cytosine and inosine (deoxy)nucleoside di- and triphosphates by an antiport mechanism. May import (deoxy)nucleoside triphosphates in exchange for intramitochondrial (deoxy)nucleoside diphosphates, thus providing precursors necessary for de novo synthesis of mitochondrial DNA and RNA while exporting products of their catabolism. Participates in mitochondrial genome maintenance, regulation of mitochondrial membrane potential and mitochondrial respiration. Upon INS or IGF1 stimulation regulates cell growth and proliferation by controlling mitochondrial DNA replication and transcription, the ratio of mitochondria-to nuclear-encoded components of the electron transport chain resulting in control of mitochondrial ROS production. Participates in dendritic cell endocytosis and may associate with mitochondrial oxidative phosphorylation. This chain is Solute carrier family 25 member 33 (SLC25A33), found in Homo sapiens (Human).